Consider the following 482-residue polypeptide: Putative ankyrin repeat protein FPV232 (482 aa).

9 ANK repeats span residues 36–65 (IPLI…NVNE), 69–100 (RYLT…DLSS), 101–128 (YEER…DGNR), 129–161 (TIDD…DTKI), 166–195 (KLKT…EVNS), 199–228 (GNNS…NTDH), 232–265 (CGTT…SVNI), 270–297 (LGFT…DPNI), and 301–332 (EKET…LRAF).

This is Putative ankyrin repeat protein FPV232 from Fowlpox virus (strain NVSL) (FPV).